The primary structure comprises 582 residues: Semenogelin-2 (582 aa).

The N-terminal stretch at 1-23 is a signal peptide; it reads MKSIILFVLSLLLILEKQAAVMG. Disordered regions lie at residues 26-65, 132-159, 272-295, 318-358, 379-417, and 439-582; these read CGSK…SFSI, GGQA…SSQY, NLNQ…RTEE, TEEK…ERHL, EEQI…EERR, and EEQI…PVST. 2 stretches are compositionally biased toward polar residues: residues 31–40 and 137–159; these read QLPSGSSQFP and RGTQ…SSQY. Residues 325–335 are compositionally biased toward polar residues; that stretch reads KSQNQVTIHSQ. The segment covering 336–345 has biased composition (basic and acidic residues); sequence GQEHGHKENK. Polar residues-rich tracts occupy residues 379-397, 439-457, 487-496, and 506-524; these read EEQI…SQAQ, KDVSQSSTSF, and SQIQ…QNAK. 2 stretches are compositionally biased toward basic and acidic residues: residues 525 to 552 and 559 to 582; these read GKSD…ESSE and TEHE…PVST.

This sequence belongs to the semenogelin family. Interacts with SERPINA5.

The protein resides in the secreted. In terms of biological role, participates in the formation of a gel matrix (sperm coagulum) entrapping the accessory gland secretions and ejaculated spermatozoa. The protein is Semenogelin-2 (SEMG2) of Hylobates lar (Lar gibbon).